Reading from the N-terminus, the 107-residue chain is UPF0145 protein BH1111 (107 aa).

It belongs to the UPF0145 family.

This Halalkalibacterium halodurans (strain ATCC BAA-125 / DSM 18197 / FERM 7344 / JCM 9153 / C-125) (Bacillus halodurans) protein is UPF0145 protein BH1111.